Reading from the N-terminus, the 381-residue chain is Creatine kinase M-type (381 aa).

Residues 11 to 98 (KLNFKAEEEY…FDPIIQDRHG (88 aa)) enclose the Phosphagen kinase N-terminal domain. Positions 125–367 (YVLSSRVRTG…KLMVEMEKKL (243 aa)) constitute a Phosphagen kinase C-terminal domain. ATP is bound at residue 128–132 (SSRVR). Residue Ser-164 is modified to Phosphoserine. Thr-166 bears the Phosphothreonine mark. Ser-178 is modified (phosphoserine). Thr-180 bears the Phosphothreonine mark. His-191 serves as a coordination point for ATP. Phosphoserine is present on Ser-199. Residues Arg-236 and Arg-292 each contribute to the ATP site. 2 positions are modified to phosphothreonine: Thr-313 and Thr-322. ATP-binding positions include 320-325 (RGTGGV) and Asp-335. A Phosphoserine modification is found at Ser-372.

It belongs to the ATP:guanido phosphotransferase family. In terms of assembly, dimer of identical or non-identical chains, which can be either B (brain type) or M (muscle type). With MM being the major form in skeletal muscle and myocardium, MB existing in myocardium, and BB existing in many tissues, especially brain.

The enzyme catalyses creatine + ATP = N-phosphocreatine + ADP + H(+). Reversibly catalyzes the transfer of phosphate between ATP and various phosphogens (e.g. creatine phosphate). Creatine kinase isoenzymes play a central role in energy transduction in tissues with large, fluctuating energy demands, such as skeletal muscle, heart, brain and spermatozoa. The protein is Creatine kinase M-type (CKM) of Sus scrofa (Pig).